The primary structure comprises 302 residues: Protease HtpX homolog (302 aa).

A helical membrane pass occupies residues 27–47 (LLMAIGGIIGGTAGMLIALII). Position 141 (His141) interacts with Zn(2+). Residue Glu142 is part of the active site. Zn(2+) is bound at residue His145. Transmembrane regions (helical) follow at residues 151-171 (VLVATIAATIAGAIGFLANMA) and 195-215 (IGAILMIIIVPIIATIVQLAI). Glu220 provides a ligand contact to Zn(2+).

Belongs to the peptidase M48B family. It depends on Zn(2+) as a cofactor.

It is found in the cell inner membrane. This chain is Protease HtpX homolog, found in Aquifex aeolicus (strain VF5).